A 550-amino-acid polypeptide reads, in one-letter code: MEKSNQPVHVTLSELKDGDKEIVDAEFLVDLLESYRFGKDNVPAREFRSKAAATAPAPVNTTEIELEEDNDGSQAQGNNSVSESTSSLFSDSDPIVLESTVSETGSNEESETGSNEENGNNWLESSSTNLPNVENKRQRNGEDCEIEEEEENNERSLSDSEEKSNLEKLLGTQENYELGNEDEEKNERSSSDSEEKSNLENLLATQENYELYCPSCSTCITRNVVLKKRKRGKHVNSSLDLKPDIPVVEPDEPSDIEEMESPVKVYVPETRIEDDQEDKEGTIFTCLVCDLKYFIRLGTKFLQLDYIRGKPVEKSVEEYIDVRKSINTTQSPPQIQPDGERFAIELLKSTVYGGLTETITSLGVVSSASASGSSTMNILALAVANLAGGLIVLAQNFQDLRNSSDQEKDRYEELLGRRTKSRIHILVAVMSYIFFGLIPPLVYAFSFYETGIKNYKLISVFLGSLVCVILLGSIKVYVRKPTNSCGSTKAYLKSAAYYTSIVVASCGISYVVGDIMGEYIEKLSLVGLDQISITSPCYGIKPEECRFTSF.

The segment at 46–199 is disordered; it reads EFRSKAAATA…SSDSEEKSNL (154 aa). 2 stretches are compositionally biased toward low complexity: residues 80–105 and 112–121; these read SVSE…SETG and TGSNEENGNN. Positions 122 to 132 are enriched in polar residues; that stretch reads WLESSSTNLPN. Residues 134–165 adopt a coiled-coil conformation; the sequence is ENKRQRNGEDCEIEEEEENNERSLSDSEEKSN. The segment covering 143 to 152 has biased composition (acidic residues); sequence DCEIEEEEEN. Composition is skewed to basic and acidic residues over residues 153 to 166 and 185 to 198; these read NERS…KSNL and KNER…EKSN. The next 4 membrane-spanning stretches (helical) occupy residues 374 to 394, 425 to 445, 458 to 478, and 500 to 520; these read STMN…IVLA, ILVA…VYAF, ISVF…KVYV, and SIVV…GEYI. Positions 393–418 form a coiled coil; the sequence is LAQNFQDLRNSSDQEKDRYEELLGRR.

This sequence belongs to the CCC1 family. Interacts directly or indirectly with NAI2.

The protein resides in the endoplasmic reticulum membrane. In terms of biological role, may sequester excess cytosolic iron and manganese into endoplasmic reticulum to reduce metal ion toxicity. Not essential for the accumulation of ER body components, including PYK10. In Arabidopsis thaliana (Mouse-ear cress), this protein is Membrane protein of ER body 2 (MEB2).